We begin with the raw amino-acid sequence, 90 residues long: Potassium channel toxin BmTXK-beta (90 aa).

The N-terminal stretch at 1–22 (MMKQQFFLFLAVIVMISSVIEA) is a signal peptide. A propeptide spanning residues 23 to 29 (GRGKEIM) is cleaved from the precursor. The BetaSPN-type CS-alpha/beta domain occupies 55-90 (EYACPVIEKWCEDHCAAKKAIGKCEDTECKCLKLRK). Cystine bridges form between Cys-58–Cys-78, Cys-65–Cys-83, and Cys-69–Cys-85.

This sequence belongs to the long chain scorpion toxin family. Class 2 subfamily. Expressed by the venom gland.

It localises to the secreted. This recombinant peptide reversibly and dose-dependently inhibits the transient outward potassium current (I(To)) of rabbit atrial myocyte and prolongs the action potential duration of rabbit atrial myocyte without affecting the action potential amplitude. Thus, the voltage-gated potassium channels Kv4.1/KCND1, Kv4.2/KCND2, Kv4.3/KCND3 may be the target of this toxin. The polypeptide is Potassium channel toxin BmTXK-beta (Olivierus martensii (Manchurian scorpion)).